A 114-amino-acid chain; its full sequence is Replication initiation control protein YabA (114 aa).

Zn(2+)-binding residues include H79, C81, C95, and C98.

It belongs to the YabA family. Homotetramer. Interacts with both DnaA and DnaN, acting as a bridge between these two proteins. It depends on Zn(2+) as a cofactor.

The protein resides in the cytoplasm. It localises to the nucleoid. Its function is as follows. Involved in control of chromosome replication initiation. Inhibits the cooperative binding of DnaA to the oriC region, thus negatively regulating initiation of chromosome replication. Inhibits the ability of DnaA-ATP to form a helix on DNA; does not disassemble preformed DnaA-DNA helices. Decreases the residence time of DnaA on the chromosome at its binding sites (oriC, replication forks and promoter-binding sites). Tethers DnaA to the replication machinery via the DNA polymerase beta sliding clamp subunit (dnaN). Associates with oriC and other DnaA targets on the chromosome in a DnaA-dependent manner. This chain is Replication initiation control protein YabA, found in Lactobacillus gasseri (strain ATCC 33323 / DSM 20243 / BCRC 14619 / CIP 102991 / JCM 1131 / KCTC 3163 / NCIMB 11718 / NCTC 13722 / AM63).